Here is a 100-residue protein sequence, read N- to C-terminus: Small ribosomal subunit protein uS14c (100 aa).

The protein belongs to the universal ribosomal protein uS14 family. As to quaternary structure, part of the 30S ribosomal subunit.

The protein localises to the plastid. The protein resides in the chloroplast. Its function is as follows. Binds 16S rRNA, required for the assembly of 30S particles. The sequence is that of Small ribosomal subunit protein uS14c from Psilotum nudum (Whisk fern).